Reading from the N-terminus, the 411-residue chain is MADAVMSDAHLLGFNTRGTKRESDQQLHLGSSGASGAGVKRQRVEPEQQEPGNPMSMPVSQAYQGFAPLNSQGNQEPTATPDTMVQPFAAIPFPPPPQNGLSTDYGSQHTQDYATQSTEHGIPLYGGGQSLAEHSAPATSTANASSTTDGSQTEGQQSQSQNNENSETKASPKRLHVSNIPFRFRDPDLRQMFGQFGKILDVEIIFNERGSKGFGFVTFETSADADRAREKLHSTVVEGRKIEVNNATARVMTNKKSVTPYGNGWKLSPVVGAVYGPELYAVPGFPYPTAAAAATTAAAFRGAHLRGRGRTVYGAVRAVPPTAIPTYPGVLYQDGFYGTELYGGYAAYRYAQPATAATAATAAAAAAAAYSDGYGRVYTADPYHTLAPATSYGVGAVASLYRGGYSRFAPY.

The disordered stretch occupies residues 16 to 175 (TRGTKRESDQ…SETKASPKRL (160 aa)). Polar residues-rich tracts occupy residues 58-83 (PVSQ…TPDT) and 99-119 (NGLS…QSTE). Residues 135–165 (SAPATSTANASSTTDGSQTEGQQSQSQNNEN) show a composition bias toward low complexity. One can recognise an RRM domain in the interval 173-249 (KRLHVSNIPF…RKIEVNNATA (77 aa)).

Interacts with papd4/gld2.

The protein localises to the nucleus. Its subcellular location is the cytoplasm. Functionally, RNA-binding protein that regulates alternative splicing events by binding to 5'-UGCAUGU-3' elements. Regulates alternative splicing of tissue-specific exons. This is RNA binding protein fox-1 homolog 2 (rbfox2) from Xenopus laevis (African clawed frog).